Consider the following 61-residue polypeptide: Photosystem II reaction center protein K (61 aa).

The propeptide occupies 1-24; that stretch reads MINIFSFICIYLHSALYSSSFFFG. The chain crosses the membrane as a helical span at residues 40 to 60; it reads MPVIPLFFFLLAFVWQAAVSF.

The protein belongs to the PsbK family. In terms of assembly, PSII is composed of 1 copy each of membrane proteins PsbA, PsbB, PsbC, PsbD, PsbE, PsbF, PsbH, PsbI, PsbJ, PsbK, PsbL, PsbM, PsbT, PsbX, PsbY, PsbZ, Psb30/Ycf12, at least 3 peripheral proteins of the oxygen-evolving complex and a large number of cofactors. It forms dimeric complexes.

It is found in the plastid. It localises to the chloroplast thylakoid membrane. Its function is as follows. One of the components of the core complex of photosystem II (PSII). PSII is a light-driven water:plastoquinone oxidoreductase that uses light energy to abstract electrons from H(2)O, generating O(2) and a proton gradient subsequently used for ATP formation. It consists of a core antenna complex that captures photons, and an electron transfer chain that converts photonic excitation into a charge separation. This is Photosystem II reaction center protein K from Pelargonium hortorum (Common geranium).